The chain runs to 307 residues: Elongation factor Ts (307 aa).

The interval 80-83 (TDFV) is involved in Mg(2+) ion dislocation from EF-Tu.

This sequence belongs to the EF-Ts family.

The protein resides in the cytoplasm. Its function is as follows. Associates with the EF-Tu.GDP complex and induces the exchange of GDP to GTP. It remains bound to the aminoacyl-tRNA.EF-Tu.GTP complex up to the GTP hydrolysis stage on the ribosome. This Variovorax paradoxus (strain S110) protein is Elongation factor Ts.